A 290-amino-acid chain; its full sequence is Membrane protein insertase YidC 1 (290 aa).

The first 19 residues, 1–19, serve as a signal peptide directing secretion; sequence MKKKALLPLFLGIMIFLAG. C20 carries the N-palmitoyl cysteine lipid modification. A lipid anchor (S-diacylglycerol cysteine) is attached at C20. Helical transmembrane passes span 56–76, 134–154, 176–196, 211–231, and 232–252; these read FGLA…PFML, MLGC…YFVL, PDIW…VVSS, MVIS…ALGL, and YWSV…IYYS. The disordered stretch occupies residues 270 to 290; sequence HNPYSKKKGKNTQVVSKKNKK. Residues 280–290 are compositionally biased toward polar residues; it reads NTQVVSKKNKK.

Belongs to the OXA1/ALB3/YidC family. Type 2 subfamily.

It localises to the cell membrane. Required for the insertion and/or proper folding and/or complex formation of integral membrane proteins into the membrane. Involved in integration of membrane proteins that insert both dependently and independently of the Sec translocase complex, as well as at least some lipoproteins. This is Membrane protein insertase YidC 1 from Staphylococcus epidermidis (strain ATCC 12228 / FDA PCI 1200).